Consider the following 239-residue polypeptide: Ribosomal RNA large subunit methyltransferase E (239 aa).

5 residues coordinate S-adenosyl-L-methionine: glycine 81, tryptophan 83, aspartate 104, aspartate 120, and aspartate 144. Lysine 184 (proton acceptor) is an active-site residue.

Belongs to the class I-like SAM-binding methyltransferase superfamily. RNA methyltransferase RlmE family.

It localises to the cytoplasm. The enzyme catalyses uridine(2552) in 23S rRNA + S-adenosyl-L-methionine = 2'-O-methyluridine(2552) in 23S rRNA + S-adenosyl-L-homocysteine + H(+). In terms of biological role, specifically methylates the uridine in position 2552 of 23S rRNA at the 2'-O position of the ribose in the fully assembled 50S ribosomal subunit. This is Ribosomal RNA large subunit methyltransferase E from Rhizobium rhizogenes (strain K84 / ATCC BAA-868) (Agrobacterium radiobacter).